Here is a 101-residue protein sequence, read N- to C-terminus: MAKKSMKARDVKRANLAEKFFAKRAELKAIVSDVNVSDEDRWNAVLKLQTLPRDSSPSRQRNRCRQTGRPHGFLRKFGLSRIKVREAAMRGEIPGLRKASW.

This sequence belongs to the universal ribosomal protein uS14 family. Part of the 30S ribosomal subunit. Contacts proteins S3 and S10.

Functionally, binds 16S rRNA, required for the assembly of 30S particles and may also be responsible for determining the conformation of the 16S rRNA at the A site. In Proteus mirabilis (strain HI4320), this protein is Small ribosomal subunit protein uS14.